Here is a 110-residue protein sequence, read N- to C-terminus: ATP-dependent Clp protease adapter protein ClpS (110 aa).

The span at 1-10 (MSDDRRRGDE) shows a compositional bias: basic and acidic residues. Residues 1–27 (MSDDRRRGDEDGGAGTGVITKTKPKTK) are disordered.

Belongs to the ClpS family. In terms of assembly, binds to the N-terminal domain of the chaperone ClpA.

Its function is as follows. Involved in the modulation of the specificity of the ClpAP-mediated ATP-dependent protein degradation. In Parvibaculum lavamentivorans (strain DS-1 / DSM 13023 / NCIMB 13966), this protein is ATP-dependent Clp protease adapter protein ClpS.